The primary structure comprises 80 residues: MKASLFAVIFGLVVLCACSFAEDQFASPNELLKSMFVESTHELTPEVEGRYCQKWMWTCDAERKCCEDMACELWCKKRLG.

Positions 1 to 21 are cleaved as a signal peptide; sequence MKASLFAVIFGLVVLCACSFA. Positions 22 to 50 are excised as a propeptide; that stretch reads EDQFASPNELLKSMFVESTHELTPEVEGR. 3 disulfides stabilise this stretch: Cys52-Cys66, Cys59-Cys71, and Cys65-Cys75. Leucine amide is present on Leu79.

It belongs to the neurotoxin 30 (phrixotoxin) family. Expressed by the venom gland.

The protein resides in the secreted. Its function is as follows. Probable ion channel inhibitor. Shows insecticidal activity when injected into mealworms. The protein is U4-theraphotoxin-Spl1a of Selenotypus plumipes (Australian featherleg tarantula).